The chain runs to 360 residues: Amine dehydrogenase (360 aa).

This sequence belongs to the amine dehydrogenase family. Homodimer.

It catalyses the reaction a secondary alkyl amine + NAD(+) + H2O = a ketone + NH4(+) + NADH + H(+). The enzyme catalyses a secondary alkyl amine + NADP(+) + H2O = a ketone + NH4(+) + NADPH + H(+). It carries out the reaction serinol + NAD(+) + H2O = dihydroxyacetone + NH4(+) + NADH + H(+). The catalysed reaction is serinol + NADP(+) + H2O = dihydroxyacetone + NH4(+) + NADPH + H(+). It catalyses the reaction 2-aminopropan-1-ol + NAD(+) + H2O = hydroxyacetone + NH4(+) + NADH + H(+). The enzyme catalyses (R)-1-phenylethylamine + NAD(+) + H2O = acetophenone + NH4(+) + NADH + H(+). It carries out the reaction (S)-1-phenylethylamine + NAD(+) + H2O = acetophenone + NH4(+) + NADH + H(+). The catalysed reaction is (2S)-2-aminobutan-1-ol + NAD(+) + H2O = 1-hydroxy-2-butanone + NH4(+) + NADH + H(+). It catalyses the reaction (2S)-2-amino-3-methylbutan-1-ol + NAD(+) + H2O = 1-hydroxy-3-methylbutan-2-one + NH4(+) + NADH + H(+). The enzyme catalyses 2-aminopentan-1-ol + NAD(+) + H2O = 1-hydroxypentan-2-one + NH4(+) + NADH + H(+). It carries out the reaction (S)-leucinol + NAD(+) + H2O = 1-hydroxy-4-methylpentan-2-one + NH4(+) + NADH + H(+). The catalysed reaction is (S)-isoleucinol + NAD(+) + H2O = (3S)-1-hydroxy-3-methylpentan-2-one + NH4(+) + NADH + H(+). It catalyses the reaction (S)-methioninol + NAD(+) + H2O = 1-hydroxy-4-(methythio)butan-2-one + NH4(+) + NADH + H(+). The enzyme catalyses 2-aminocyclohexanol + NAD(+) + H2O = 2-hydroxycyclohexan-1-one + NH4(+) + NADH + H(+). It carries out the reaction L-alanine + NAD(+) + H2O = pyruvate + NH4(+) + NADH + H(+). The catalysed reaction is D-alanine + NAD(+) + H2O = pyruvate + NH4(+) + NADH + H(+). It catalyses the reaction L-aspartate + NAD(+) + H2O = oxaloacetate + NH4(+) + NADH + H(+). The enzyme catalyses D-aspartate + NAD(+) + H2O = oxaloacetate + NH4(+) + NADH + H(+). It carries out the reaction L-glutamate + NAD(+) + H2O = 2-oxoglutarate + NH4(+) + NADH + H(+). The catalysed reaction is D-glutamate + NAD(+) + H2O = 2-oxoglutarate + NH4(+) + NADH + H(+). It catalyses the reaction L-serine + NAD(+) + H2O = 3-hydroxypyruvate + NH4(+) + NADH + H(+). The enzyme catalyses D-serine + NAD(+) + H2O = 3-hydroxypyruvate + NH4(+) + NADH + H(+). It carries out the reaction methylamine + NAD(+) + H2O = formaldehyde + NH4(+) + NADH + H(+). The catalysed reaction is ethylamine + NAD(+) + H2O = acetaldehyde + NH4(+) + NADH + H(+). It catalyses the reaction propylamine + NAD(+) + H2O = propanal + NH4(+) + NADH + H(+). The enzyme catalyses butylamine + NAD(+) + H2O = butanal + NH4(+) + NADH + H(+). It carries out the reaction hexylamine + NAD(+) + H2O = hexanal + NH4(+) + NADH + H(+). The catalysed reaction is octylamine + NAD(+) + H2O = octanal + NH4(+) + NADH + H(+). It catalyses the reaction (R)-sec-butylamine + NAD(+) + H2O = butan-2-one + NH4(+) + NADH + H(+). The enzyme catalyses (S)-sec-butylamine + NAD(+) + H2O = butan-2-one + NH4(+) + NADH + H(+). It carries out the reaction 2-aminopentane + NAD(+) + H2O = pentan-2-one + NH4(+) + NADH + H(+). The catalysed reaction is 3-aminopentane + NAD(+) + H2O = pentan-3-one + NH4(+) + NADH + H(+). It catalyses the reaction (2R)-heptan-2-amine + NAD(+) + H2O = heptan-2-one + NH4(+) + NADH + H(+). The enzyme catalyses (2S)-heptan-2-amine + NAD(+) + H2O = heptan-2-one + NH4(+) + NADH + H(+). It carries out the reaction benzylamine + NAD(+) + H2O = benzaldehyde + NH4(+) + NADH + H(+). The catalysed reaction is 3-aminobutan-2-ol + NAD(+) + H2O = acetoin + NH4(+) + NADH + H(+). It catalyses the reaction 3-aminobutan-1-ol + NAD(+) + H2O = 4-hydroxybutan-2-one + NH4(+) + NADH + H(+). The enzyme catalyses 5-hydroxypentan-2-amine + NAD(+) + H2O = 5-hydroxypentan-2-one + NH4(+) + NADH + H(+). It carries out the reaction 4-hydroxyhexan-3-amine + NAD(+) + H2O = 4-hydroxyhexan-3-one + NH4(+) + NADH + H(+). The catalysed reaction is 5-hydroxyoctan-4-amine + NAD(+) + H2O = 5-hydroxyoctan-4-one + NH4(+) + NADH + H(+). It catalyses the reaction 2-hydroxy-1-phenylethan-1-amine + NAD(+) + H2O = 2-hydroxyacetophenone + NH4(+) + NADH + H(+). The enzyme catalyses hexan-2-amine + NAD(+) + H2O = hexan-2-one + NH4(+) + NADH + H(+). It carries out the reaction 4-phenylbutan-2-amine + NAD(+) + H2O = 4-phenylbutan-2-one + NH4(+) + NADH + H(+). Catalyzes the reversible oxidative deaminations of a broad range of amines, amino alcohols and amino acids. Catalyzes the reversible dehydrogenation of serinol in the presence of NAD(+) to give dihydroxyacetone, ammonium ion and NADH, while NADP(+) shows a slight activity. Is also able to produce 2-amino-1-propanol and aspartate by the reductive amination of the corresponding keto alcohol (hydroxyacetone) and keto acid (oxaloacetate) in the presence of ammonium ions and NADH, and that of acetophenone from phenylethylamine by the oxidative deamination in the presence of NAD(+). The protein is Amine dehydrogenase of Streptomyces virginiae (Streptomyces cinnamonensis).